A 93-amino-acid polypeptide reads, in one-letter code: Pyrimidine/purine nucleoside phosphorylase (93 aa).

Belongs to the nucleoside phosphorylase PpnP family.

It catalyses the reaction a purine D-ribonucleoside + phosphate = a purine nucleobase + alpha-D-ribose 1-phosphate. The enzyme catalyses adenosine + phosphate = alpha-D-ribose 1-phosphate + adenine. The catalysed reaction is cytidine + phosphate = cytosine + alpha-D-ribose 1-phosphate. It carries out the reaction guanosine + phosphate = alpha-D-ribose 1-phosphate + guanine. It catalyses the reaction inosine + phosphate = alpha-D-ribose 1-phosphate + hypoxanthine. The enzyme catalyses thymidine + phosphate = 2-deoxy-alpha-D-ribose 1-phosphate + thymine. The catalysed reaction is uridine + phosphate = alpha-D-ribose 1-phosphate + uracil. It carries out the reaction xanthosine + phosphate = alpha-D-ribose 1-phosphate + xanthine. In terms of biological role, catalyzes the phosphorolysis of diverse nucleosides, yielding D-ribose 1-phosphate and the respective free bases. Can use uridine, adenosine, guanosine, cytidine, thymidine, inosine and xanthosine as substrates. Also catalyzes the reverse reactions. The protein is Pyrimidine/purine nucleoside phosphorylase of Pseudomonas syringae pv. syringae (strain B728a).